The primary structure comprises 249 residues: 1-(5-phosphoribosyl)-5-[(5-phosphoribosylamino)methylideneamino] imidazole-4-carboxamide isomerase (249 aa).

The active-site Proton acceptor is D11. The active-site Proton donor is D133.

This sequence belongs to the HisA/HisF family.

The protein resides in the cytoplasm. The catalysed reaction is 1-(5-phospho-beta-D-ribosyl)-5-[(5-phospho-beta-D-ribosylamino)methylideneamino]imidazole-4-carboxamide = 5-[(5-phospho-1-deoxy-D-ribulos-1-ylimino)methylamino]-1-(5-phospho-beta-D-ribosyl)imidazole-4-carboxamide. Its pathway is amino-acid biosynthesis; L-histidine biosynthesis; L-histidine from 5-phospho-alpha-D-ribose 1-diphosphate: step 4/9. In Haemophilus influenzae (strain 86-028NP), this protein is 1-(5-phosphoribosyl)-5-[(5-phosphoribosylamino)methylideneamino] imidazole-4-carboxamide isomerase.